The following is a 290-amino-acid chain: Undecaprenyl-diphosphatase (290 aa).

The next 6 helical transmembrane spans lie at 39-59 (PGAAFTAISQIGTEAAVLIYF), 85-105 (AQMGWLVIVGSIPIGVLGITL), 118-138 (LIATTLIVMGIVLGVADRLAA), 202-222 (SFLLAIPAVLASGAYELKDVG), 230-250 (PTIFATLVAFFVGYAVIAWFM), and 261-281 (FVIYRILLGVVLFILIWAGVL).

This sequence belongs to the UppP family.

It localises to the cell membrane. It carries out the reaction di-trans,octa-cis-undecaprenyl diphosphate + H2O = di-trans,octa-cis-undecaprenyl phosphate + phosphate + H(+). Its function is as follows. Catalyzes the dephosphorylation of undecaprenyl diphosphate (UPP). Confers resistance to bacitracin. This chain is Undecaprenyl-diphosphatase, found in Streptomyces griseus subsp. griseus (strain JCM 4626 / CBS 651.72 / NBRC 13350 / KCC S-0626 / ISP 5235).